A 267-amino-acid chain; its full sequence is Undecaprenyl-diphosphatase (267 aa).

8 consecutive transmembrane segments (helical) span residues 1–21 (MSYF…FLPI), 39–59 (QGLA…VIYF), 83–103 (AKLA…GLVM), 111–131 (LRSA…LWWV), 144–164 (AGWK…IPGT), 189–209 (FLMS…KLVT), 218–238 (FLLT…HLFL), and 246–266 (MTPF…YLLM).

Belongs to the UppP family.

The protein resides in the cell inner membrane. It catalyses the reaction di-trans,octa-cis-undecaprenyl diphosphate + H2O = di-trans,octa-cis-undecaprenyl phosphate + phosphate + H(+). Its function is as follows. Catalyzes the dephosphorylation of undecaprenyl diphosphate (UPP). Confers resistance to bacitracin. The protein is Undecaprenyl-diphosphatase of Vibrio vulnificus (strain CMCP6).